The sequence spans 492 residues: Beta-Ala-His dipeptidase (492 aa).

H107 is a Zn(2+) binding site. D109 is an active-site residue. D140 is a Zn(2+) binding site. The Proton acceptor role is filled by E174. E175 contributes to the Zn(2+) binding site. Phosphoserine is present on S194. Positions 203 and 453 each coordinate Zn(2+).

This sequence belongs to the peptidase M20A family. As to quaternary structure, homodimer. Zn(2+) serves as cofactor. Detected exclusively in kidney.

It localises to the secreted. It catalyses the reaction Preferential hydrolysis of the beta-Ala-|-His dipeptide (carnosine), and also anserine, Xaa-|-His dipeptides and other dipeptides including homocarnosine.. The enzyme catalyses carnosine + H2O = beta-alanine + L-histidine. It carries out the reaction anserine + H2O = N(pros)-methyl-L-histidine + beta-alanine. The catalysed reaction is L-alanyl-L-histidine + H2O = L-histidine + L-alanine. It catalyses the reaction glycyl-L-histidine + H2O = L-histidine + glycine. The enzyme catalyses L-homocarnosine + H2O = 4-aminobutanoate + L-histidine. Catalyzes the peptide bond hydrolysis in Xaa-His dipeptides, displaying the highest activity toward carnosine (beta-alanyl-L-histidine) and anserine (beta-alanyl-3-methyl-histidine). This Mus musculus (Mouse) protein is Beta-Ala-His dipeptidase (Cndp1).